The sequence spans 662 residues: Putative cysteine-rich receptor-like protein kinase 16 (662 aa).

Positions 1–26 (MIFIMKLKNLLPIFCFFLVSFSISSA) are cleaved as a signal peptide. 2 consecutive Gnk2-homologous domains span residues 27-131 (QKCG…NRSF) and 137-244 (MTPF…LYQF). Residues 27 to 277 (QKCGKTGLFK…DDGGKISTRN (251 aa)) lie on the Extracellular side of the membrane. N-linked (GlcNAc...) asparagine glycans are attached at residues Asn55, Asn64, Asn106, Asn128, Asn145, Asn152, and Asn206. A helical membrane pass occupies residues 278–298 (ILGITVALAFFITVLLVLGYA). Topologically, residues 299 to 662 (LSRRRKAYQE…DASITSVDLR (364 aa)) are cytoplasmic. Residues 335-612 (FQKSNKLGHG…VFQMLTNTFL (278 aa)) enclose the Protein kinase domain. ATP-binding positions include 341–349 (LGHGGFGEV) and Lys363. Asp460 (proton acceptor) is an active-site residue.

Belongs to the protein kinase superfamily. Ser/Thr protein kinase family. CRK subfamily.

Its subcellular location is the membrane. The enzyme catalyses L-seryl-[protein] + ATP = O-phospho-L-seryl-[protein] + ADP + H(+). It catalyses the reaction L-threonyl-[protein] + ATP = O-phospho-L-threonyl-[protein] + ADP + H(+). The polypeptide is Putative cysteine-rich receptor-like protein kinase 16 (CRK16) (Arabidopsis thaliana (Mouse-ear cress)).